A 127-amino-acid polypeptide reads, in one-letter code: Large ribosomal subunit protein bL12 (127 aa).

Belongs to the bacterial ribosomal protein bL12 family. As to quaternary structure, homodimer. Part of the ribosomal stalk of the 50S ribosomal subunit. Forms a multimeric L10(L12)X complex, where L10 forms an elongated spine to which 2 to 4 L12 dimers bind in a sequential fashion. Binds GTP-bound translation factors.

In terms of biological role, forms part of the ribosomal stalk which helps the ribosome interact with GTP-bound translation factors. Is thus essential for accurate translation. This chain is Large ribosomal subunit protein bL12, found in Nitratiruptor sp. (strain SB155-2).